The sequence spans 64 residues: Beta-defensin 13 (64 aa).

The N-terminal stretch at 1–22 is a signal peptide; that stretch reads MRIFSLIVAGLVLLIQLYPAWG. 3 cysteine pairs are disulfide-bonded: cysteine 30–cysteine 57, cysteine 37–cysteine 51, and cysteine 41–cysteine 58.

It belongs to the beta-defensin family. As to expression, expressed in testis and to a lesser extent in epididymis (caput, corpus and cauda). Also weakly expressed in kidneys.

It is found in the secreted. Its function is as follows. Has antibacterial activity. The chain is Beta-defensin 13 (Defb13) from Mus musculus (Mouse).